The following is a 600-amino-acid chain: Aspartate--tRNA(Asp/Asn) ligase (600 aa).

Glu175 is an L-aspartate binding site. The segment at 199-202 (QLFK) is aspartate. Arg221 contributes to the L-aspartate binding site. ATP contacts are provided by residues 221 to 223 (RDE) and Gln230. Residue His453 participates in L-aspartate binding. Glu487 is a binding site for ATP. An L-aspartate-binding site is contributed by Arg494. 539 to 542 (GWDR) is an ATP binding site. The tract at residues 578–600 (AAQRKESGIDFKPKKGPQGQKEK) is disordered. Basic and acidic residues predominate over residues 580–590 (QRKESGIDFKP).

This sequence belongs to the class-II aminoacyl-tRNA synthetase family. Type 1 subfamily. Homodimer.

The protein resides in the cytoplasm. The enzyme catalyses tRNA(Asx) + L-aspartate + ATP = L-aspartyl-tRNA(Asx) + AMP + diphosphate. Its function is as follows. Aspartyl-tRNA synthetase with relaxed tRNA specificity since it is able to aspartylate not only its cognate tRNA(Asp) but also tRNA(Asn). Reaction proceeds in two steps: L-aspartate is first activated by ATP to form Asp-AMP and then transferred to the acceptor end of tRNA(Asp/Asn). The chain is Aspartate--tRNA(Asp/Asn) ligase from Corynebacterium jeikeium (strain K411).